Consider the following 867-residue polypeptide: Putative ubiquitin thioesterase L96 (867 aa).

Disordered regions lie at residues 49–73 (VNQYSTNPPSSSSESDDDEDMGKQD), 177–204 (IKSVSPSRSPSPRRSRSPSPNIQNMKKK), 231–271 (YILS…PKYR), and 379–591 (LSTQ…YKGG). Basic residues-rich tracts occupy residues 234 to 258 (SRKKSPSPVRKSRSPSLRQRSRSPG) and 421 to 430 (KITRKPKSPR). 2 stretches are compositionally biased toward low complexity: residues 433-462 (PPASVRRSRTPSVPKSPSARPRSKSPSVRA) and 472-551 (PPSS…KSPS). Residues 565–575 (ITVDPSVTPPS) are compositionally biased toward polar residues. Residues 582-591 (RPELPEYKGG) show a composition bias toward basic and acidic residues. One can recognise an OTU domain in the interval 606–745 (YKVIPVKGDG…DYHYTALTPL (140 aa)). D614 is an active-site residue. C617 acts as the Nucleophile in catalysis. H738 is a catalytic residue.

It carries out the reaction Thiol-dependent hydrolysis of ester, thioester, amide, peptide and isopeptide bonds formed by the C-terminal Gly of ubiquitin (a 76-residue protein attached to proteins as an intracellular targeting signal).. Hydrolase that can remove conjugated ubiquitin from proteins and may therefore play an important regulatory role at the level of protein turnover by preventing degradation. May be involved in TIV genomic DNA packaging in a manner related to the Gag polyproteins of the mammalian viruses. The sequence is that of Putative ubiquitin thioesterase L96 from Tipula iridescent virus (TIV).